We begin with the raw amino-acid sequence, 512 residues long: Threonine synthase (512 aa).

N6-(pyridoxal phosphate)lysine is present on K121. Positions 273, 274, 275, 277, and 445 each coordinate pyridoxal 5'-phosphate.

The protein belongs to the threonine synthase family. Pyridoxal 5'-phosphate serves as cofactor.

The catalysed reaction is O-phospho-L-homoserine + H2O = L-threonine + phosphate. It functions in the pathway amino-acid biosynthesis; L-threonine biosynthesis; L-threonine from L-aspartate: step 5/5. Catalyzes the gamma-elimination of phosphate from L-phosphohomoserine and the beta-addition of water to produce L-threonine. The sequence is that of Threonine synthase (THR4) from Eremothecium gossypii (strain ATCC 10895 / CBS 109.51 / FGSC 9923 / NRRL Y-1056) (Yeast).